The following is a 278-amino-acid chain: Orotidine 5'-phosphate decarboxylase (278 aa).

Residue Lys-96 is the Proton donor of the active site.

It belongs to the OMP decarboxylase family. Type 2 subfamily.

The catalysed reaction is orotidine 5'-phosphate + H(+) = UMP + CO2. It functions in the pathway pyrimidine metabolism; UMP biosynthesis via de novo pathway; UMP from orotate: step 2/2. The protein is Orotidine 5'-phosphate decarboxylase of Salinispora tropica (strain ATCC BAA-916 / DSM 44818 / JCM 13857 / NBRC 105044 / CNB-440).